The primary structure comprises 1867 residues: TATA-binding protein-associated factor MOT1 (1867 aa).

Ser-93 bears the Phosphoserine mark. The disordered stretch occupies residues 169–228; that stretch reads KTDDIKQETSMLNASDKANENKSNANKKSARMLAMARRKKKMSAKNTPKHPVDITESSVS. Residues 181-203 show a composition bias toward low complexity; the sequence is NASDKANENKSNANKKSARMLAM. The Nuclear localization signal signature appears at 195–211; it reads KKSARMLAMARRKKKMS. 3 HEAT repeats span residues 289–326, 445–482, and 541–578; these read WQFQGIYELLLDNLMSENWEIRHGAALGLRELVKKHAY, GLLENVVRIVLYGLNQSDDDVQSVAASILTPITSEFVK, and WSFKSLVPKLYPFLRHSISSVRRAVLNLLIAFLSIKDD. At Ser-677 the chain carries Phosphoserine. HEAT repeat units follow at residues 1108–1145 and 1188–1225; these read SEVFTRFPVLLTFLRSNLSVFRYSAARTFADLAKISSV and PYVIFLIVPLLGRMSDSNEDVRNLATTTFASIIKLVPL. The region spanning 1284 to 1457 is the Helicase ATP-binding domain; the sequence is AFLNKYHLHG…WSLFDFLMPG (174 aa). ATP is bound at residue 1297–1304; sequence DDMGLGKT. The short motif at 1408–1411 is the DEGH box element; that stretch reads DEGH. One copy of the HEAT 6 repeat lies at 1495–1537; it reads ALHKQVLPFMLRRLKEDVLSDLPPKIIQDYYCELGDLQKQLYM. Residues 1639-1787 enclose the Helicase C-terminal domain; that stretch reads PIQNVISQHR…STVVNQQNSG (149 aa). The disordered stretch occupies residues 1802-1822; that stretch reads PDNVTSQDNEEKNNGDSQAAK.

Belongs to the SNF2/RAD54 helicase family. Forms a complex with TBP which binds TATA DNA with high affinity but with altered specificity.

It is found in the mitochondrion. It localises to the nucleus. Functionally, regulates transcription in association with TATA binding protein (TBP). Removes TBP from the TATA box via its C-terminal ATPase activity. Both transcription activation and repression require its ATPase activity. The protein is TATA-binding protein-associated factor MOT1 (MOT1) of Saccharomyces cerevisiae (strain ATCC 204508 / S288c) (Baker's yeast).